A 246-amino-acid polypeptide reads, in one-letter code: Bis(5'-nucleosyl)-tetraphosphatase PrpE [asymmetrical] (246 aa).

This sequence belongs to the PrpE family. Ni(2+) serves as cofactor.

The enzyme catalyses P(1),P(4)-bis(5'-guanosyl) tetraphosphate + H2O = GMP + GTP + 2 H(+). Its function is as follows. Asymmetrically hydrolyzes Ap4p to yield AMP and ATP. The polypeptide is Bis(5'-nucleosyl)-tetraphosphatase PrpE [asymmetrical] (Bacillus cereus (strain ZK / E33L)).